An 83-amino-acid polypeptide reads, in one-letter code: Small ribosomal subunit protein bS16 (83 aa).

The protein belongs to the bacterial ribosomal protein bS16 family.

In Azoarcus sp. (strain BH72), this protein is Small ribosomal subunit protein bS16.